The chain runs to 552 residues: FERRY endosomal RAB5 effector complex subunit 3 (552 aa).

Phosphoserine is present on serine 79.

As to quaternary structure, component of the FERRY complex composed of five subunits, TBCK, PPP1R21, FERRY3, CRYZL1 and GATD1 with a ratio of 1:2:1:2:4, respectively.

The protein resides in the cytoplasm. It localises to the early endosome. Functionally, component of the FERRY complex (Five-subunit Endosomal Rab5 and RNA/ribosome intermediary). The FERRY complex directly interacts with mRNAs and RAB5A, and functions as a RAB5A effector involved in the localization and the distribution of specific mRNAs most likely by mediating their endosomal transport. The complex recruits mRNAs and ribosomes to early endosomes through direct mRNA-interaction. Plays a role in mast cell degranulation. The protein is FERRY endosomal RAB5 effector complex subunit 3 of Mus musculus (Mouse).